The primary structure comprises 245 residues: Proteasome subunit alpha type-7-1B (245 aa).

It belongs to the peptidase T1A family. The 26S proteasome consists of a 20S proteasome core and two 19S regulatory subunits. The 20S proteasome core is composed of 28 subunits that are arranged in four stacked rings, resulting in a barrel-shaped structure. The two end rings are each formed by seven alpha subunits, and the two central rings are each formed by seven beta subunits. The catalytic chamber with the active sites is on the inside of the barrel. Testis specific.

It is found in the cytoplasm. The protein resides in the nucleus. Functionally, the proteasome is a multicatalytic proteinase complex which is characterized by its ability to cleave peptides with Arg, Phe, Tyr, Leu, and Glu adjacent to the leaving group at neutral or slightly basic pH. The proteasome has an ATP-dependent proteolytic activity. The polypeptide is Proteasome subunit alpha type-7-1B (Pros28.1B) (Drosophila virilis (Fruit fly)).